A 124-amino-acid polypeptide reads, in one-letter code: Large ribosomal subunit protein uL18 (124 aa).

This sequence belongs to the universal ribosomal protein uL18 family. Part of the 50S ribosomal subunit; part of the 5S rRNA/L5/L18/L25 subcomplex. Contacts the 5S and 23S rRNAs.

Its function is as follows. This is one of the proteins that bind and probably mediate the attachment of the 5S RNA into the large ribosomal subunit, where it forms part of the central protuberance. This chain is Large ribosomal subunit protein uL18, found in Aquifex pyrophilus.